The chain runs to 405 residues: Tryptophan synthase beta chain (405 aa).

K98 carries the post-translational modification N6-(pyridoxal phosphate)lysine.

Belongs to the TrpB family. Tetramer of two alpha and two beta chains. Pyridoxal 5'-phosphate is required as a cofactor.

The catalysed reaction is (1S,2R)-1-C-(indol-3-yl)glycerol 3-phosphate + L-serine = D-glyceraldehyde 3-phosphate + L-tryptophan + H2O. It functions in the pathway amino-acid biosynthesis; L-tryptophan biosynthesis; L-tryptophan from chorismate: step 5/5. In terms of biological role, the beta subunit is responsible for the synthesis of L-tryptophan from indole and L-serine. The protein is Tryptophan synthase beta chain of Xanthomonas axonopodis pv. citri (strain 306).